The following is a 96-amino-acid chain: Maintenance of carboxysome distribution protein B (96 aa).

The segment covering 1–18 (MTNLEDKLSASIKTENKD) has biased composition (basic and acidic residues). Positions 1–96 (MTNLEDKLSA…STHPRRVWPD (96 aa)) are disordered. Residues 59–74 (ARATTTKPAVSKSSKP) are compositionally biased toward low complexity.

Monomer, associates with McdA:DNA. Interacts with shell components of the carboxysome.

The protein localises to the carboxysome. Its function is as follows. McdA and McdB together mediate carboxysome positioning on the nucleoid and to prevent their aggregation in the cell. Undergoes liquid-liquid phase separation at pH 7.0 in the presence of crowders polyethylene glycol or Ficoll. McdA is an ATPase that forms dynamic gradients on the nucleoid in response to adapter protein McdB, which associates with carboxysomes. The interplay between McdA gradients on the nucleoid and McdB-bound carboxysomes result in the equal spacing of Cbs along the cell length. Stimulates the ATPase activity of McdA, causing McdA to be released from DNA. Functionally, incorrect positioning (aggregation) of carboxysomes results in reduced CO(2) fixation by encapsulated form 1 ribulose-1,5-bisphosphate carboxylase (RuBisCO, cbbL/cbbS), which leads to slower growth. This Halothiobacillus neapolitanus (strain ATCC 23641 / c2) (Thiobacillus neapolitanus) protein is Maintenance of carboxysome distribution protein B.